Here is a 240-residue protein sequence, read N- to C-terminus: MATPHINAEMGDFADVVLMPGDPLRAKHIAETFLEDVREVNNVRGMLGFTGTYKGRKISVMGHGMGIPSCSIYTKELITDFGVKKIIRVGSCGAVRMDVKLRDVVIGMGACTDSKVNRMRFKDHDFAAIADFGMVRNAVDAAKALGVDARVGNIFSADLFYSPDGGEMFDVMEKYGILGVEMEAAGIYGVAAEFGAKALTICTVSDHIRTHEQTSAAERQTTFNDMIKIALESVLLGDKE.

Position 5 (His5) interacts with a purine D-ribonucleoside. Phosphate contacts are provided by residues Gly21, Arg25, Arg44, and 88-91; that span reads RVGS. Residues 181-183 and 205-206 each bind a purine D-ribonucleoside; these read EME and SD. The Proton donor role is filled by Asp206.

The protein belongs to the PNP/UDP phosphorylase family. Homohexamer; trimer of homodimers.

The catalysed reaction is a purine D-ribonucleoside + phosphate = a purine nucleobase + alpha-D-ribose 1-phosphate. It carries out the reaction a purine 2'-deoxy-D-ribonucleoside + phosphate = a purine nucleobase + 2-deoxy-alpha-D-ribose 1-phosphate. Functionally, catalyzes the reversible phosphorolytic breakdown of the N-glycosidic bond in the beta-(deoxy)ribonucleoside molecules, with the formation of the corresponding free purine bases and pentose-1-phosphate. This Enterobacter sp. (strain 638) protein is Purine nucleoside phosphorylase DeoD-type.